The sequence spans 387 residues: Succinate--CoA ligase [ADP-forming] subunit beta (387 aa).

Positions 9-244 (KRLLAEEGVP…STQQDGREIT (236 aa)) constitute an ATP-grasp domain. Residues Lys-46, 53 to 55 (GRG), Glu-99, Ser-102, and Glu-107 each bind ATP. 2 residues coordinate Mg(2+): Asn-199 and Asp-213. Substrate is bound by residues Asn-264 and 321–323 (GIT).

This sequence belongs to the succinate/malate CoA ligase beta subunit family. As to quaternary structure, heterotetramer of two alpha and two beta subunits. Requires Mg(2+) as cofactor.

It catalyses the reaction succinate + ATP + CoA = succinyl-CoA + ADP + phosphate. It carries out the reaction GTP + succinate + CoA = succinyl-CoA + GDP + phosphate. The protein operates within carbohydrate metabolism; tricarboxylic acid cycle; succinate from succinyl-CoA (ligase route): step 1/1. Its function is as follows. Succinyl-CoA synthetase functions in the citric acid cycle (TCA), coupling the hydrolysis of succinyl-CoA to the synthesis of either ATP or GTP and thus represents the only step of substrate-level phosphorylation in the TCA. The beta subunit provides nucleotide specificity of the enzyme and binds the substrate succinate, while the binding sites for coenzyme A and phosphate are found in the alpha subunit. The protein is Succinate--CoA ligase [ADP-forming] subunit beta of Acidithiobacillus ferrooxidans (strain ATCC 23270 / DSM 14882 / CIP 104768 / NCIMB 8455) (Ferrobacillus ferrooxidans (strain ATCC 23270)).